A 134-amino-acid polypeptide reads, in one-letter code: MDFQTIQVMPWEYVLASQSLNNYQENHVRWSQSPDSHTFSVDLPGLRKEEIKVEIEDSIYLIIRTEATPMSPPDQPLKTFKRKFRLPESIDMIGISAGYEDGVLTVIVPKRIMTRRLIDPSDVPESLQLLARAA.

In terms of domain architecture, sHSP spans 19–126 (SLNNYQENHV…LIDPSDVPES (108 aa)).

The protein belongs to the small heat shock protein (HSP20) family. As to quaternary structure, may form oligomeric structures.

It is found in the cytoplasm. This chain is 15.4 kDa class V heat shock protein (HSP15.4), found in Arabidopsis thaliana (Mouse-ear cress).